The chain runs to 468 residues: Aspartate ammonia-lyase (468 aa).

Thr101, Ser140, Thr141, Asn142, Thr187, and His188 together coordinate L-aspartate. The SS loop stretch occupies residues Gly317–Asn326. Catalysis depends on Ser318, which acts as the Proton acceptor. L-aspartate is bound by residues Ser319 and Lys324.

This sequence belongs to the class-II fumarase/aspartase family. Aspartase subfamily. Homotetramer.

It catalyses the reaction L-aspartate = fumarate + NH4(+). Unlike E.coli aspartase, the enzyme is not activated by the presence of divalent metal ions at alkaline pH. In terms of biological role, catalyzes the reversible conversion of L-aspartate to fumarate and ammonia. Is highly specific for L-aspartate in the deamination reaction, and cannot use alternative substrates such as D-aspartic acid, alpha-methyl-DL-aspartic acid, beta-methyl-DL-aspartic acid or L-glutamate. In the reverse reaction, alternative nucleophiles (such as hydroxylamine, hydrazine, methoxylamine and methylamine) can replace ammonia in vitro, leading to the formation of N-substituted aspartic acid derivatives. The chain is Aspartate ammonia-lyase from Bacillus sp.